A 392-amino-acid chain; its full sequence is Branched-chain-amino-acid aminotransferase, mitochondrial (392 aa).

The transit peptide at 1 to 27 (MAAAALGQIWARKFLSVPWLLCGPRRY) directs the protein to the mitochondrion. Y168 lines the substrate pocket. K229 bears the N6-(pyridoxal phosphate)lysine mark. K321 is modified (N6-acetyllysine).

It belongs to the class-IV pyridoxal-phosphate-dependent aminotransferase family. As to quaternary structure, homodimer. Requires pyridoxal 5'-phosphate as cofactor.

The protein localises to the mitochondrion. It catalyses the reaction L-leucine + 2-oxoglutarate = 4-methyl-2-oxopentanoate + L-glutamate. The catalysed reaction is L-isoleucine + 2-oxoglutarate = (S)-3-methyl-2-oxopentanoate + L-glutamate. It carries out the reaction L-valine + 2-oxoglutarate = 3-methyl-2-oxobutanoate + L-glutamate. Catalyzes the first reaction in the catabolism of the essential branched chain amino acids leucine, isoleucine, and valine. May also function as a transporter of branched chain alpha-keto acids. In Pongo abelii (Sumatran orangutan), this protein is Branched-chain-amino-acid aminotransferase, mitochondrial (BCAT2).